The following is a 492-amino-acid chain: Putative methyl-accepting chemotaxis AlkN (492 aa).

A run of 2 helical transmembrane segments spans residues 9-29 (FFLILVMAGFSFFVALFGMRL) and 159-179 (YVYFLVVSINCLFFVVIFLLM). The region spanning 180 to 231 (KKTRSSIDEIVHVMNDMSRGDLTYRTIPSNDEVGKMQSSIIAMGAGVSALIE) is the HAMP domain. Positions 236 to 472 (IQGDLFNSAG…DMLDNANIIR (237 aa)) constitute a Methyl-accepting transducer domain.

The protein belongs to the methyl-accepting chemotaxis (MCP) protein family.

Its subcellular location is the membrane. It functions in the pathway hydrocarbon metabolism; alkane degradation. Its function is as follows. Chemotactic-signal transducers respond to changes in the concentration of attractants and repellents in the environment, transduce a signal from the outside to the inside of the cell, and facilitate sensory adaptation through the variation of the level of methylation. The protein is Putative methyl-accepting chemotaxis AlkN (alkN) of Ectopseudomonas oleovorans (Pseudomonas oleovorans).